Here is a 190-residue protein sequence, read N- to C-terminus: Transcription factor bHLH162 (190 aa).

The span at 1-12 (MEPSHSNTGQSR) shows a compositional bias: polar residues. Residues 1–21 (MEPSHSNTGQSRSVDRKTVEK) are disordered. The region spanning 11–63 (SRSVDRKTVEKNRRMQMKSLYSELISLLPHHSSTEPLTLPDQLDEAANYIKKL) is the bHLH domain.

Belongs to the bHLH protein family.

It is found in the nucleus. In Arabidopsis thaliana (Mouse-ear cress), this protein is Transcription factor bHLH162.